A 230-amino-acid chain; its full sequence is Cytochrome c oxidase subunit 2 (230 aa).

The Mitochondrial intermembrane segment spans residues 1 to 14 (MAYPLQLGFQDATS). Residues 15 to 45 (PIMEELLHFHDHTLMIVFLISSLVLYIISTM) form a helical membrane-spanning segment. Residues 46–59 (LTTKLTHTNTMDAQ) lie on the Mitochondrial matrix side of the membrane. Residues 60-87 (EVETIWTILPAIILILIALPSLRILYMM) form a helical membrane-spanning segment. The Mitochondrial intermembrane segment spans residues 88–230 (DEINNPNLTI…NWTSSMMSTS (143 aa)). Cu cation contacts are provided by His161, Cys196, Glu198, Cys200, His204, and Met207. Glu198 contributes to the Mg(2+) binding site. Tyr218 is modified (phosphotyrosine).

It belongs to the cytochrome c oxidase subunit 2 family. Component of the cytochrome c oxidase (complex IV, CIV), a multisubunit enzyme composed of 14 subunits. The complex is composed of a catalytic core of 3 subunits MT-CO1, MT-CO2 and MT-CO3, encoded in the mitochondrial DNA, and 11 supernumerary subunits COX4I, COX5A, COX5B, COX6A, COX6B, COX6C, COX7A, COX7B, COX7C, COX8 and NDUFA4, which are encoded in the nuclear genome. The complex exists as a monomer or a dimer and forms supercomplexes (SCs) in the inner mitochondrial membrane with NADH-ubiquinone oxidoreductase (complex I, CI) and ubiquinol-cytochrome c oxidoreductase (cytochrome b-c1 complex, complex III, CIII), resulting in different assemblies (supercomplex SCI(1)III(2)IV(1) and megacomplex MCI(2)III(2)IV(2)). Found in a complex with TMEM177, COA6, COX18, COX20, SCO1 and SCO2. Interacts with TMEM177 in a COX20-dependent manner. Interacts with COX20. Interacts with COX16. Requires Cu cation as cofactor.

It is found in the mitochondrion inner membrane. It catalyses the reaction 4 Fe(II)-[cytochrome c] + O2 + 8 H(+)(in) = 4 Fe(III)-[cytochrome c] + 2 H2O + 4 H(+)(out). Functionally, component of the cytochrome c oxidase, the last enzyme in the mitochondrial electron transport chain which drives oxidative phosphorylation. The respiratory chain contains 3 multisubunit complexes succinate dehydrogenase (complex II, CII), ubiquinol-cytochrome c oxidoreductase (cytochrome b-c1 complex, complex III, CIII) and cytochrome c oxidase (complex IV, CIV), that cooperate to transfer electrons derived from NADH and succinate to molecular oxygen, creating an electrochemical gradient over the inner membrane that drives transmembrane transport and the ATP synthase. Cytochrome c oxidase is the component of the respiratory chain that catalyzes the reduction of oxygen to water. Electrons originating from reduced cytochrome c in the intermembrane space (IMS) are transferred via the dinuclear copper A center (CU(A)) of subunit 2 and heme A of subunit 1 to the active site in subunit 1, a binuclear center (BNC) formed by heme A3 and copper B (CU(B)). The BNC reduces molecular oxygen to 2 water molecules using 4 electrons from cytochrome c in the IMS and 4 protons from the mitochondrial matrix. In Ornithorhynchus anatinus (Duckbill platypus), this protein is Cytochrome c oxidase subunit 2 (MT-CO2).